A 223-amino-acid polypeptide reads, in one-letter code: Histone H1.5 (223 aa).

A compositionally biased stretch (low complexity) spans 1–14; the sequence is MSETAPAETAAPAP. The interval 1–56 is disordered; it reads MSETAPAETAAPAPVEKSPAKKKTTKKAGAAKRKATGPPVSELITKAVSASKERGG. The residue at position 2 (Ser2) is an N-acetylserine. Position 2 is a phosphoserine (Ser2). Position 17 is an N6-acetyllysine (Lys17). At Ser18 the chain carries Phosphoserine. Residues 20–35 show a composition bias toward basic residues; the sequence is AKKKTTKKAGAAKRKA. N6-methyllysine is present on Lys27. Position 34 is an N6-(beta-hydroxybutyryl)lysine; alternate (Lys34). Residue Lys34 is modified to N6-succinyllysine; alternate. A Phosphothreonine modification is found at Thr36. One can recognise an H15 domain in the interval 36 to 109; sequence TGPPVSELIT…GASGSFKLNK (74 aa). Lys46 is subject to N6-acetyllysine. Position 52 is an N6-(beta-hydroxybutyryl)lysine (Lys52). The residue at position 54 (Arg54) is a Citrulline. N6-(beta-hydroxybutyryl)lysine is present on Lys64. Lys75 carries the post-translational modification N6-acetyllysine. 3 positions are modified to N6-(beta-hydroxybutyryl)lysine: Lys85, Lys90, and Lys106. A disordered region spans residues 91–223; it reads GTLVQTKGTG…KAKKAVSKKK (133 aa). The span at 119 to 130 shows a compositional bias: basic residues; it reads KAKKTGAAKAKK. Phosphothreonine is present on residues Thr135 and Thr152. A compositionally biased stretch (basic residues) spans 137–158; that stretch reads KKPKKTAGAKKTVKKTPKKAKK. Lys165 carries the post-translational modification N6-acetyllysine. Over residues 166–184 the composition is skewed to basic residues; the sequence is KVAKSPKKAKAAAKPKKAA. Phosphoserine is present on residues Ser170 and Ser186. Residues 191-223 are compositionally biased toward basic residues; sequence KAVKSKASKPKVTKPKTAKPKAAKAKKAVSKKK.

This sequence belongs to the histone H1/H5 family. As to quaternary structure, interacts with MSX1. Post-translationally, H1 histones are progressively phosphorylated during the cell cycle, becoming maximally phosphorylated during late G2 phase and M phase, and being dephosphorylated sharply thereafter. In terms of processing, citrullination at Arg-54 (H1R54ci) by PADI4 takes place within the DNA-binding site of H1 and results in its displacement from chromatin and global chromatin decondensation, thereby promoting pluripotency and stem cell maintenance. Hydroxybutyrylation of histones is induced by starvation.

The protein resides in the nucleus. It is found in the chromosome. Functionally, histone H1 protein binds to linker DNA between nucleosomes forming the macromolecular structure known as the chromatin fiber. Histones H1 are necessary for the condensation of nucleosome chains into higher-order structured fibers. Also acts as a regulator of individual gene transcription through chromatin remodeling, nucleosome spacing and DNA methylation. This is Histone H1.5 (H1-5) from Mus musculus (Mouse).